We begin with the raw amino-acid sequence, 337 residues long: Phospholipase A1 1 (337 aa).

Positions 1–21 are cleaved as a signal peptide; the sequence is MNFKYSILFICFVKVLDNCYA. Positions 22–35 are excised as a propeptide; sequence ADDLTTLRNGTLDR. A disulfide bridge links Cys-41 with Cys-124. The active-site Nucleophile is Ser-174. Asp-202 serves as the catalytic Charge relay system. Disulfide bonds link Cys-213/Cys-218 and Cys-256/Cys-261. His-263 functions as the Charge relay system in the catalytic mechanism. 3 disulfide bridges follow: Cys-278–Cys-305, Cys-279–Cys-330, and Cys-298–Cys-303.

The protein belongs to the AB hydrolase superfamily. Lipase family. Expressed by the venom gland.

The protein localises to the secreted. It catalyses the reaction a 1,2-diacyl-sn-glycero-3-phosphocholine + H2O = a 2-acyl-sn-glycero-3-phosphocholine + a fatty acid + H(+). In terms of biological role, catalyzes the hydrolysis of phosphatidylcholine with phospholipase A1 activity. May act as an allergen and induce hemolytic activity. This Polistes dominula (European paper wasp) protein is Phospholipase A1 1.